A 299-amino-acid chain; its full sequence is HTH-type transcriptional regulator PgrR (299 aa).

An HTH lysR-type domain is found at 4 to 61; it reads EEIADLMAFVVVAEERSFTRAAARLSMAQSALSQIVRRIEERLGLRLLTRTTRSVVPT. Residues 21–40 constitute a DNA-binding region (H-T-H motif); that stretch reads FTRAAARLSMAQSALSQIVR.

The protein belongs to the LysR transcriptional regulatory family.

Functionally, regulates the expression of genes involved in peptidoglycan (PG) degradation. Could play a role in switch control between recycling and degradation of PG peptides. Negatively regulates the expression of the ycjY-ymjD-ymjC-mpaA operon by binding to the PgrR-box. In addition, other genes are predicted to be under the control of PgrR, including genes related to membrane formation and function. This Escherichia coli (strain K12) protein is HTH-type transcriptional regulator PgrR (pgrR).